Reading from the N-terminus, the 655-residue chain is Forkhead box protein O1 (655 aa).

2 disordered regions span residues 1–63 and 116–158; these read MAEA…SASA and GCLH…SRRN. A Phosphothreonine; by PKB/AKT1 or PKB/AKT2 and SGK1 modification is found at Thr24. A compositionally biased stretch (low complexity) spans 33-63; the sequence is SQSNSATSSPAPSGSAAANPDAAAGLPSASA. A compositionally biased stretch (pro residues) spans 120 to 141; it reads PAPPQPPPPGPLSQHPPVPPAA. Positions 159–235 form a DNA-binding region, fork-head; that stretch reads AWGNLSYADL…VQNEGTGKSS (77 aa). DNA-binding regions lie at residues 211 to 218 and 234 to 237; these read NSIRHNLS and SSWW. Phosphoserine; by STK4/MST1 is present on residues Ser212, Ser218, Ser234, and Ser235. Residues 234–344 form a disordered region; it reads SSWWMLNPEG…QDDLGEGDVH (111 aa). An N6-acetyllysine mark is found at Lys245 and Lys248. Position 249 is a phosphoserine; by CDK1 (Ser249). Arg251 and Arg253 each carry omega-N-methylarginine; by PRMT1. The Nuclear localization signal motif lies at 251–253; the sequence is RRR. Ser256 carries the phosphoserine; by PKB/AKT1 and SGK1 modification. Residues Lys262, Lys265, and Lys274 each carry the N6-acetyllysine modification. Basic residues predominate over residues 264-275; that stretch reads AKSRSRAAKKKA. A sufficient for interaction with NLK region spans residues 283–563; it reads GAGDSPGSQF…RLTQVKTPVQ (281 aa). A phosphoserine mark is found at Ser287 and Ser298. Polar residues predominate over residues 309 to 326; that stretch reads NWSTFRPRTSSNASTISG. Phosphoserine; by PKB/AKT1 is present on Ser319. Ser322 is modified (phosphoserine; by CK1 and SGK1). Ser325 bears the Phosphoserine; by CK1 mark. Phosphoserine; by DYRK1A is present on Ser329. At Thr333 the chain carries Phosphothreonine. A required for interaction with RUNX2 region spans residues 363 to 459; the sequence is SEISNPENME…GGMSQYNCAP (97 aa). An N6-acetyllysine modification is found at Lys423. A Required for interaction with SIRT1 motif is present at residues 462–466; it reads LKELL. Over residues 507-534 the composition is skewed to polar residues; that stretch reads YGSQASHNKMMNPSSHTHPGHAQQTSAV. Residues 507 to 537 form a disordered region; sequence YGSQASHNKMMNPSSHTHPGHAQQTSAVNGR.

In terms of assembly, interacts with LRPPRC. Interacts with RUNX2; the interaction inhibits RUNX2 transcriptional activity and mediates the IGF1/insulin-dependent BGLAP expression in osteoblasts Interacts with PPP2R1A; the interaction regulates the dephosphorylation of FOXO1 at Thr-24 and Ser-256 leading to its nuclear import. Interacts (acetylated form) with PPARG. Interacts with XBP1 isoform 2; this interaction is direct and leads to FOXO1 ubiquitination and degradation via the proteasome pathway. Interacts with NLK. Interacts with SIRT1; the interaction results in the deacetylation of FOXO1 leading to activation of FOXO1-mediated transcription of genes involved in DNA repair and stress resistance. Binds to CDK1. Interacts with the 14-3-3 proteins, YWHAG and YWHAZ; the interactions require insulin-stimulated phosphorylation on Thr-24, promote nuclear exit and loss of transcriptional activity. Interacts with SKP2; the interaction ubiquitinates FOXO1 leading to its proteasomal degradation. The interaction requires the presence of KRIT1. Interacts (via the C-terminal half) with ATF4 (via its DNA-binding domain); the interaction occurs in osteoblasts, regulates glucose homeostasis via suppression of beta-cell proliferation and subsequent decrease in insulin production. Interacts with PRMT1; the interaction methylates FOXO1, prevents PKB/AKT1 phosphorylation and retains FOXO1 in the nucleus. Interacts with EP300 and CREBBP; the interactions acetylate FOXO1. Interacts with SIRT2; the interaction is disrupted in response to oxidative stress or serum deprivation, leading to increased level of acetylated FOXO1, which promotes stress-induced autophagy by stimulating E1-like activating enzyme ATG7. Interacts (acetylated form) with ATG7; the interaction is increased in response to oxidative stress or serum deprivation and promotes the autophagic process leading to cell death. Interacts (via the Fork-head domain) with CEBPA; the interaction increases when FOXO1 is deacetylated. Interacts with WDFY2. Forms a complex with WDFY2 and AKT1. Interacts with CRY1. Interacts with PPIA/CYPA; the interaction promotes FOXO1 dephosphorylation, nuclear accumulation and transcriptional activity. Interacts with TOX4; FOXO1 is required for full induction of TOX4-dependent activity and the interaction is inhibited by insulin. Interacts (when phosphorylated on Ser-256) with STUB1/CHIP. Post-translationally, phosphorylation by NLK promotes nuclear export and inhibits the transcriptional activity. In response to growth factors, phosphorylation on Thr-24, Ser-256 and Ser-322 by PKB/AKT1 promotes nuclear export and inactivation of transactivational activity. Phosphorylation on Thr-24 is required for binding 14-3-3 proteins. Phosphorylation of Ser-256 decreases DNA-binding activity and promotes the phosphorylation of Thr-24 and Ser-319, permitting phosphorylation of Ser-322 and Ser-325, probably by CDK1, leading to nuclear exclusion and loss of function. Stress signals, such as response to oxygen or nitric oxide, attenuate the PKB/AKT1-mediated phosphorylation leading to nuclear retention. Phosphorylation of Ser-329 is independent of IGF1 and leads to reduced function. Dephosphorylated on Thr-24 and Ser-256 by PP2A in beta-cells under oxidative stress leading to nuclear retention. Phosphorylation of Ser-249 by CDK1 disrupts binding of 14-3-3 proteins leading to nuclear accumulation and has no effect on DNA-binding nor transcriptional activity. Phosphorylation by STK4/MST1 on Ser-212, upon oxidative stress, inhibits binding to 14-3-3 proteins and nuclear export. PPIA/CYPA promotes its dephosphorylation on Ser-256. In terms of processing, ubiquitinated by SKP2. Ubiquitination leads to proteasomal degradation. Ubiquitinated by STUB1/CHIP; when Ser-256 is phosphorylated. Methylation inhibits AKT1-mediated phosphorylation at Ser-256 and is increased by oxidative stress. Post-translationally, acetylated. Acetylation at Lys-262, Lys-265 and Lys-274 are necessary for autophagic cell death induction. Deacetylated by SIRT2 in response to oxidative stress or serum deprivation, thereby negatively regulating FOXO1-mediated autophagic cell death. Once in the nucleus, acetylated by CREBBP/EP300. Acetylation diminishes the interaction with target DNA and attenuates the transcriptional activity. It increases the phosphorylation at Ser-256. Deacetylation by SIRT1 results in reactivation of the transcriptional activity. Oxidative stress by hydrogen peroxide treatment appears to promote deacetylation and uncoupling of insulin-induced phosphorylation. By contrast, resveratrol acts independently of acetylation. Acetylated at Lys-423, promoting its localization to the nucleus and transcription factor activity. Deacetylation at Lys-423 by SIRT6, promotes its translocation into the cytoplasm, preventing its transcription factor activity. Deacetylation and subsequent inhibition by SIRT6 has different effects depending on cell types: it inhibits gluconeogenesis in hepatocytes, promotes glucose sensing in pancreatic beta-cells and regulates lipid catabolism in brown adipocytes. Expressed in umbilical endothelial cells (at protein level). Abundantly expressed in skeletal muscle and ovary, with lower expression in the heart, placenta, lung, liver, pancreas, spleen, testis and small intestine. Weakly expressed in the brain, thymus, prostate and mucosal lining of the colon.

It is found in the cytoplasm. It localises to the nucleus. Transcription factor that is the main target of insulin signaling and regulates metabolic homeostasis in response to oxidative stress. Binds to the insulin response element (IRE) with consensus sequence 5'-TT[G/A]TTTTG-3' and the related Daf-16 family binding element (DBE) with consensus sequence 5'-TT[G/A]TTTAC-3'. Activity suppressed by insulin. Main regulator of redox balance and osteoblast numbers and controls bone mass. Orchestrates the endocrine function of the skeleton in regulating glucose metabolism. Also acts as a key regulator of chondrogenic commitment of skeletal progenitor cells in response to lipid availability: when lipids levels are low, translocates to the nucleus and promotes expression of SOX9, which induces chondrogenic commitment and suppresses fatty acid oxidation. Acts synergistically with ATF4 to suppress osteocalcin/BGLAP activity, increasing glucose levels and triggering glucose intolerance and insulin insensitivity. Also suppresses the transcriptional activity of RUNX2, an upstream activator of osteocalcin/BGLAP. Acts as an inhibitor of glucose sensing in pancreatic beta cells by acting as a transcription repressor and suppressing expression of PDX1. In hepatocytes, promotes gluconeogenesis by acting together with PPARGC1A and CEBPA to activate the expression of genes such as IGFBP1, G6PC1 and PCK1. Also promotes gluconeogenesis by directly promoting expression of PPARGC1A and G6PC1. Important regulator of cell death acting downstream of CDK1, PKB/AKT1 and STK4/MST1. Promotes neural cell death. Mediates insulin action on adipose tissue. Regulates the expression of adipogenic genes such as PPARG during preadipocyte differentiation and, adipocyte size and adipose tissue-specific gene expression in response to excessive calorie intake. Regulates the transcriptional activity of GADD45A and repair of nitric oxide-damaged DNA in beta-cells. Required for the autophagic cell death induction in response to starvation or oxidative stress in a transcription-independent manner. Mediates the function of MLIP in cardiomyocytes hypertrophy and cardiac remodeling. Positive regulator of apoptosis in cardiac smooth muscle cells as a result of its transcriptional activation of pro-apoptotic genes. Regulates endothelial cell (EC) viability and apoptosis in a PPIA/CYPA-dependent manner via transcription of CCL2 and BCL2L11 which are involved in EC chemotaxis and apoptosis. The chain is Forkhead box protein O1 from Homo sapiens (Human).